We begin with the raw amino-acid sequence, 197 residues long: Dephospho-CoA kinase (197 aa).

The 196-residue stretch at 2 to 197 (IIGITGGIAS…SALLLLANPR (196 aa)) folds into the DPCK domain. 10–15 (ASGKST) is an ATP binding site.

Belongs to the CoaE family.

It is found in the cytoplasm. The catalysed reaction is 3'-dephospho-CoA + ATP = ADP + CoA + H(+). The protein operates within cofactor biosynthesis; coenzyme A biosynthesis; CoA from (R)-pantothenate: step 5/5. In terms of biological role, catalyzes the phosphorylation of the 3'-hydroxyl group of dephosphocoenzyme A to form coenzyme A. The chain is Dephospho-CoA kinase from Streptococcus pyogenes serotype M1.